The chain runs to 80 residues: Small ribosomal subunit protein bS18A (80 aa).

The protein belongs to the bacterial ribosomal protein bS18 family. In terms of assembly, part of the 30S ribosomal subunit. Forms a tight heterodimer with protein bS6.

Binds as a heterodimer with protein bS6 to the central domain of the 16S rRNA, where it helps stabilize the platform of the 30S subunit. In Rhodococcus jostii (strain RHA1), this protein is Small ribosomal subunit protein bS18A.